The following is a 128-amino-acid chain: Conopressin-conophysin (128 aa).

Positions methionine 1–alanine 27 are cleaved as a signal peptide. Residues cysteine 28 and cysteine 33 are joined by a disulfide bond. Glycine amide is present on glycine 36. Positions glycine 37 to arginine 44 are excised as a propeptide. Cystine bridges form between cysteine 50–cysteine 90, cysteine 53–cysteine 64, cysteine 58–cysteine 80, cysteine 65–cysteine 70, cysteine 97–cysteine 115, cysteine 109–cysteine 127, and cysteine 116–cysteine 121.

It belongs to the vasopressin/oxytocin family. Expressed by the venom gland.

The protein localises to the secreted. Targets vasopressin-oxytocin related receptors. Is more active on fish receptors than on their human counterparts, supporting an evolved role of this conopressin in the envenomation process. Acts as an agonist on zebrafish vasopressin receptors V1a1R (EC(50)=10.6 nM), V1a2R (EC(50)=44.06 nM, partial agonist), V2R (EC(50)=299.2 nM) and oxytocin receptor (EC(50)=353.73 nM, partial agonist). Shows a weaker activity on human receptors AVPR1B (EC(50)=51.92 nM), AVPR1A (EC(50)=123.78 nM), AVPR2 (EC(50)=299.2 nM) and oxytocin (OXTR) receptor (EC(50)=455.66 nM, partial agonist). In vivo, exhibits grooming and scratching behavior in mice, following intracerebral injection. The polypeptide is Conopressin-conophysin (Conus geographus (Geography cone)).